A 91-amino-acid polypeptide reads, in one-letter code: N(2)-fixation sustaining protein CowN (91 aa).

It belongs to the CowN family.

Its function is as follows. Is required to sustain N(2)-dependent growth in the presence of low levels of carbon monoxide (CO). Probably acts by protecting the N(2) fixation ability of the nitrogenase complex, which is inactivated in the presence of CO. In Beijerinckia indica subsp. indica (strain ATCC 9039 / DSM 1715 / NCIMB 8712), this protein is N(2)-fixation sustaining protein CowN.